We begin with the raw amino-acid sequence, 201 residues long: Ribosome maturation factor RimP (201 aa).

It belongs to the RimP family.

The protein resides in the cytoplasm. Functionally, required for maturation of 30S ribosomal subunits. The chain is Ribosome maturation factor RimP from Rhizobium leguminosarum bv. trifolii (strain WSM2304).